A 119-amino-acid polypeptide reads, in one-letter code: Chymotrypsin inhibitor WCI (119 aa).

5 disulfides stabilise this stretch: Cys6–Cys55, Cys20–Cys44, Cys29–Cys87, Cys45–Cys105, and Cys57–Cys116.

The protein localises to the secreted. Its function is as follows. Inhibits bovine, insect and wheat chymotrypsins. Inhibits bovine chymotrypsin with Ki of 0.6 nM. Does not inhibit human or wheat alpha-amylases, bovine pancreatic trypsin, or trypsin-like activity isolated from wheat. The protein is Chymotrypsin inhibitor WCI of Triticum aestivum (Wheat).